A 309-amino-acid polypeptide reads, in one-letter code: Ribonuclease Z (309 aa).

Zn(2+)-binding residues include histidine 63, histidine 65, aspartate 67, histidine 68, histidine 145, aspartate 216, and histidine 274. Aspartate 67 functions as the Proton acceptor in the catalytic mechanism.

Belongs to the RNase Z family. In terms of assembly, homodimer. The cofactor is Zn(2+).

It carries out the reaction Endonucleolytic cleavage of RNA, removing extra 3' nucleotides from tRNA precursor, generating 3' termini of tRNAs. A 3'-hydroxy group is left at the tRNA terminus and a 5'-phosphoryl group is left at the trailer molecule.. Zinc phosphodiesterase, which displays some tRNA 3'-processing endonuclease activity. Probably involved in tRNA maturation, by removing a 3'-trailer from precursor tRNA. The protein is Ribonuclease Z of Streptococcus thermophilus (strain CNRZ 1066).